A 253-amino-acid chain; its full sequence is tRNA (guanine-N(1)-)-methyltransferase (253 aa).

S-adenosyl-L-methionine is bound by residues Gly-110 and 130 to 135 (IGDYIL).

The protein belongs to the RNA methyltransferase TrmD family. Homodimer.

Its subcellular location is the cytoplasm. It catalyses the reaction guanosine(37) in tRNA + S-adenosyl-L-methionine = N(1)-methylguanosine(37) in tRNA + S-adenosyl-L-homocysteine + H(+). Specifically methylates guanosine-37 in various tRNAs. The polypeptide is tRNA (guanine-N(1)-)-methyltransferase (Carboxydothermus hydrogenoformans (strain ATCC BAA-161 / DSM 6008 / Z-2901)).